The primary structure comprises 478 residues: Glutamate--tRNA ligase (478 aa).

A 'HIGH' region motif is present at residues 15–25 (PSPTGFLHIGG). The short motif at 244–248 (KLSKR) is the 'KMSKS' region element. ATP is bound at residue Lys247.

The protein belongs to the class-I aminoacyl-tRNA synthetase family. Glutamate--tRNA ligase type 1 subfamily. In terms of assembly, monomer.

It localises to the cytoplasm. It catalyses the reaction tRNA(Glu) + L-glutamate + ATP = L-glutamyl-tRNA(Glu) + AMP + diphosphate. Its function is as follows. Catalyzes the attachment of glutamate to tRNA(Glu) in a two-step reaction: glutamate is first activated by ATP to form Glu-AMP and then transferred to the acceptor end of tRNA(Glu). This is Glutamate--tRNA ligase from Bradyrhizobium sp. (strain ORS 278).